The following is a 248-amino-acid chain: Uridylate kinase (248 aa).

13–16 (KLSG) is an ATP binding site. Glycine 55 provides a ligand contact to UMP. ATP-binding residues include glycine 56 and arginine 60. UMP contacts are provided by residues aspartate 75 and 136-143 (TGNPYFTT). Positions 163, 169, and 172 each coordinate ATP.

The protein belongs to the UMP kinase family. As to quaternary structure, homohexamer.

The protein localises to the cytoplasm. The catalysed reaction is UMP + ATP = UDP + ADP. The protein operates within pyrimidine metabolism; CTP biosynthesis via de novo pathway; UDP from UMP (UMPK route): step 1/1. Its activity is regulated as follows. Inhibited by UTP. Its function is as follows. Catalyzes the reversible phosphorylation of UMP to UDP. This Leptospira interrogans serogroup Icterohaemorrhagiae serovar copenhageni (strain Fiocruz L1-130) protein is Uridylate kinase.